The sequence spans 529 residues: Peptide chain release factor 3 (529 aa).

The region spanning 11 to 280 is the tr-type G domain; sequence AKRRTFAIIS…GLVEWAPAPM (270 aa). Residues 20–27, 88–92, and 142–145 each bind GTP; these read SHPDAGKT, DTPGH, and NKLD.

This sequence belongs to the TRAFAC class translation factor GTPase superfamily. Classic translation factor GTPase family. PrfC subfamily.

The protein resides in the cytoplasm. Functionally, increases the formation of ribosomal termination complexes and stimulates activities of RF-1 and RF-2. It binds guanine nucleotides and has strong preference for UGA stop codons. It may interact directly with the ribosome. The stimulation of RF-1 and RF-2 is significantly reduced by GTP and GDP, but not by GMP. In Citrobacter koseri (strain ATCC BAA-895 / CDC 4225-83 / SGSC4696), this protein is Peptide chain release factor 3.